We begin with the raw amino-acid sequence, 120 residues long: Large ribosomal subunit protein uL22 (120 aa).

Belongs to the universal ribosomal protein uL22 family. Part of the 50S ribosomal subunit.

Functionally, this protein binds specifically to 23S rRNA; its binding is stimulated by other ribosomal proteins, e.g. L4, L17, and L20. It is important during the early stages of 50S assembly. It makes multiple contacts with different domains of the 23S rRNA in the assembled 50S subunit and ribosome. In terms of biological role, the globular domain of the protein is located near the polypeptide exit tunnel on the outside of the subunit, while an extended beta-hairpin is found that lines the wall of the exit tunnel in the center of the 70S ribosome. The polypeptide is Large ribosomal subunit protein uL22 (Crocosphaera subtropica (strain ATCC 51142 / BH68) (Cyanothece sp. (strain ATCC 51142))).